A 188-amino-acid chain; its full sequence is Putative manganese efflux pump MntP (188 aa).

Helical transmembrane passes span 3–23, 39–59, 65–85, 104–124, 125–145, and 167–187; these read MITL…VALG, LGWH…LAGL, IETY…GKMI, GMSL…VGLS, LAIV…IAGV, and IAGG…HTLG.

The protein belongs to the MntP (TC 9.B.29) family.

Its subcellular location is the cell inner membrane. In terms of biological role, probably functions as a manganese efflux pump. The sequence is that of Putative manganese efflux pump MntP from Syntrophotalea carbinolica (strain DSM 2380 / NBRC 103641 / GraBd1) (Pelobacter carbinolicus).